Here is a 680-residue protein sequence, read N- to C-terminus: MCGSVVSDSEREFEFHFWGFGHLGKEEERIMAGKRSSPFSSPLLRPPPEFLNVKEEGETETPCWRKEVDENLKRLQSLLFGADKFLEKSDFSSAQILGLRLLGFLDSRSVTDADRDFIGPIRREVASKIDLALEGLVSDSDRKAFELANTAPGAIFGSKGGFDVEKIKQSKYFGFHVSQSNGKGVKEMEERHDTDKLIPKAPKSMMQAKLTSLYGNSIGKPDNQRKTSVNNQDRASDECVIVERSHGFGFGTKRPHAETSSLANDGEVKEDGAPNGFVSAKIKLEMDVRQKRGSTESPSSCLSPQSDKNALGRGYGSRSGGLRRGYRSNFVPPVKTNGNNVGNLTSRIGGKTDDALDDSTRTCLEMLCGPDGELPEKLRNLEPRLIEHVSNEIMDRDPNVRWDDIAGLEHAKKCVTEMVIWPLLRPDIFKGCRSPGKGLLLFGPPGTGKTMIGKAIAGEAKATFFYISASSLTSKWIGEGEKLVRALFGVASCRQPAVIFVDEIDSLLSQRKSDGEHESSRRLKTQFLIEMEGFDSGSEQILLIGATNRPQELDEAARRRLTKRLYIPLPSSEARAWIIQNLLKKDGLFTLSDDDMNIICNLTEGYSGSDMKNLVKDATMGPLREALKRGIDITNLTKDDMRLVTLQDFKDALQEVRPSVSQNELGIYENWNNQFGSLSL.

Disordered regions lie at residues 214–234 (YGNS…NQDR), 250–275 (FGTK…GAPN), and 288–352 (VRQK…GGKT). Residues 295–308 (TESPSSCLSPQSDK) are compositionally biased toward polar residues. Residues 313-323 (RGYGSRSGGLR) show a composition bias toward gly residues. Polar residues predominate over residues 336–346 (TNGNNVGNLTS). Residues Ala406 and 446 to 451 (GTGKTM) each bind ATP.

Belongs to the AAA ATPase family. It depends on Mg(2+) as a cofactor.

It is found in the nucleus. The enzyme catalyses ATP + H2O = ADP + phosphate + H(+). Involved in DNA double-strand break (DBS) repair via homologous recombination (HR). Limits class II meiotic crossover (CO) formation by regulating the invasion step of meiotic HR. May counteract DMC1 and RAD51-mediated inter-homolog strand invasion to limit CO formation. Functions independently of FANCM. This is ATPase family AAA domain-containing protein FIGL1 from Arabidopsis thaliana (Mouse-ear cress).